We begin with the raw amino-acid sequence, 267 residues long: tRNA pseudouridine synthase A (267 aa).

Residue aspartate 55 is the Nucleophile of the active site. Tyrosine 111 lines the substrate pocket.

This sequence belongs to the tRNA pseudouridine synthase TruA family.

It carries out the reaction uridine(38/39/40) in tRNA = pseudouridine(38/39/40) in tRNA. In terms of biological role, formation of pseudouridine at positions 38, 39 and 40 in the anticodon stem and loop of transfer RNAs. The sequence is that of tRNA pseudouridine synthase A from Thermococcus gammatolerans (strain DSM 15229 / JCM 11827 / EJ3).